Reading from the N-terminus, the 769-residue chain is Integrin beta-2 (769 aa).

The signal sequence occupies residues 1–22 (MLCRCSPLLLLVGLLTLRSALS). Glutamine 23 carries the post-translational modification Pyrrolidone carboxylic acid. The Extracellular portion of the chain corresponds to 23-700 (QECAKYKVST…ETRECVKGPN (678 aa)). Positions 24–74 (ECAKYKVSTCRDCIESGPGCAWCQKLNFSGQGEPDSVRCDTREQLLAKGCV) constitute a PSI domain. 28 disulfide bridges follow: cysteine 25–cysteine 43, cysteine 33–cysteine 447, cysteine 36–cysteine 62, cysteine 46–cysteine 73, cysteine 191–cysteine 198, cysteine 246–cysteine 286, cysteine 386–cysteine 400, cysteine 420–cysteine 445, cysteine 449–cysteine 467, cysteine 459–cysteine 470, cysteine 472–cysteine 481, cysteine 483–cysteine 514, cysteine 497–cysteine 512, cysteine 506–cysteine 517, cysteine 519–cysteine 534, cysteine 536–cysteine 559, cysteine 541–cysteine 557, cysteine 549–cysteine 562, cysteine 564–cysteine 573, cysteine 575–cysteine 598, cysteine 582–cysteine 596, cysteine 590–cysteine 601, cysteine 603–cysteine 612, cysteine 615–cysteine 618, cysteine 622–cysteine 662, cysteine 628–cysteine 647, cysteine 631–cysteine 643, and cysteine 670–cysteine 695. Residues asparagine 50 and asparagine 116 are each glycosylated (N-linked (GlcNAc...) asparagine). A VWFA domain is found at 124 to 363 (GYPIDLYYLM…ELIKNAYNKL (240 aa)). Residues serine 136 and serine 138 each contribute to the Mg(2+) site. Ca(2+)-binding residues include serine 138, aspartate 141, aspartate 142, and aspartate 173. Asparagine 229, aspartate 231, proline 233, and glutamate 234 together coordinate Ca(2+). Glutamate 234 contributes to the Mg(2+) binding site. Asparagine 254 is a glycosylation site (N-linked (GlcNAc...) asparagine). Ca(2+) contacts are provided by aspartate 264 and glutamate 347. The Cell attachment site signature appears at 397-399 (RGD). 4 consecutive I-EGF domains span residues 449 to 482 (CGDS…KHCE), 483 to 535 (CQTQ…QFCE), 536 to 574 (CDNM…SACQ), and 575 to 613 (CLKS…PLCT). N-linked (GlcNAc...) asparagine glycosylation occurs at asparagine 501. N-linked (GlcNAc...) asparagine glycosylation is present at asparagine 642. The helical transmembrane segment at 701–723 (IAAIVGGTVGGVVLVGIFLLVIW) threads the bilayer. At 724-769 (KVLTHLSDLREYKRFEKEKLKSQWNNDNPLFKSATTTVMNPKFAER) the chain is on the cytoplasmic side. Phosphoserine occurs at positions 745 and 756. 2 positions are modified to phosphothreonine: threonine 758 and threonine 760.

This sequence belongs to the integrin beta chain family. Heterodimer of an alpha and a beta subunit. The ITGB2 beta subunit associates with the ITGAL, ITGAM, ITGAX or ITGAD alpha subunits. Found in a complex with CD177 and ITGAM/CD11b. Interacts with FGR. Interacts with COPS5 and RANBP9. Interacts with FLNA (via filamin repeats 4, 9, 12, 17, 19, 21, and 23). Interacts with THBD. Both Ser-745 and Ser-756 become phosphorylated when T-cells are exposed to phorbol esters. Phosphorylation on Thr-758 (but not on Ser-756) allows interaction with 14-3-3 proteins.

Its subcellular location is the cell membrane. The protein localises to the membrane raft. Its function is as follows. Integrin ITGAL/ITGB2 is a receptor for ICAM1, ICAM2, ICAM3 and ICAM4. Integrin ITGAL/ITGB2 is also a receptor for the secreted form of ubiquitin-like protein ISG15; the interaction is mediated by ITGAL. Integrins ITGAM/ITGB2 and ITGAX/ITGB2 are receptors for the iC3b fragment of the third complement component and for fibrinogen. Integrin ITGAX/ITGB2 recognizes the sequence G-P-R in fibrinogen alpha-chain. Integrin ITGAM/ITGB2 recognizes P1 and P2 peptides of fibrinogen gamma chain. Integrin ITGAM/ITGB2 is also a receptor for factor X. Integrin ITGAD/ITGB2 is a receptor for ICAM3 and VCAM1. Contributes to natural killer cell cytotoxicity. Involved in leukocyte adhesion and transmigration of leukocytes including T-cells and neutrophils. Triggers neutrophil transmigration during lung injury through PTK2B/PYK2-mediated activation. Integrin alpha-L/beta-2 in association with ICAM3, contributes to apoptotic neutrophil phagocytosis by macrophages. The protein is Integrin beta-2 (ITGB2) of Sus scrofa (Pig).